The chain runs to 168 residues: Thiosulfate dehydrogenase [quinone] small subunit (168 aa).

The chain crosses the membrane as a helical span at residues 6–26; that stretch reads IIGIIFAILVVGWILATGQWA.

In terms of assembly, heterodimer of a large and a small subunit in a 2:2 stoichiometry. TQO may associate with the terminal oxidase formed by doxBCE. Post-translationally, the N-terminus is blocked. In terms of processing, glycosylated.

It localises to the cell membrane. The catalysed reaction is 6-decylubiquinone + 2 thiosulfate = 6-decylubiquinol + tetrathionate. Inhibited by sulfite, metabisulfite and dithonite. TQO plays a role in sulfur oxidation and is proposed to couple sulfur oxidation to dioxygen reduction; caldariellaquinone or sulfolobus quinone seem to serve to transfer electrons to the electron transport chain terminal oxidase formed by DoxBCE. In Acidianus ambivalens (Desulfurolobus ambivalens), this protein is Thiosulfate dehydrogenase [quinone] small subunit (doxA).